Reading from the N-terminus, the 346-residue chain is Probable choline kinase 3 (346 aa).

The ATP site is built by Arg71, Gln207, and Asp224.

Belongs to the choline/ethanolamine kinase family.

It catalyses the reaction choline + ATP = phosphocholine + ADP + H(+). Its pathway is phospholipid metabolism; phosphatidylcholine biosynthesis; phosphocholine from choline: step 1/1. Its function is as follows. Involved in phospholipid biosynthesis. Catalyzes the first step in phosphatidylcholine biosynthesis. In Arabidopsis thaliana (Mouse-ear cress), this protein is Probable choline kinase 3.